The chain runs to 351 residues: Thiamine-phosphate synthase (351 aa).

Residues 1-127 (MQNLAPASEG…SETAKALRYR (127 aa)) form a unknown region. The disordered stretch occupies residues 64–84 (RAARQTDQDPGTALSHPQERD). Positions 128-351 (VYILEQALTL…LRRLSQGEPS (224 aa)) are thiamine-phosphate synthase. Residues 178–182 (QYRDK) and Asn-210 each bind 4-amino-2-methyl-5-(diphosphooxymethyl)pyrimidine. Mg(2+) contacts are provided by Asp-211 and Asp-230. Residue Ser-249 coordinates 4-amino-2-methyl-5-(diphosphooxymethyl)pyrimidine. A 2-[(2R,5Z)-2-carboxy-4-methylthiazol-5(2H)-ylidene]ethyl phosphate-binding site is contributed by 275-277 (TPT). Position 278 (Lys-278) interacts with 4-amino-2-methyl-5-(diphosphooxymethyl)pyrimidine. A 2-[(2R,5Z)-2-carboxy-4-methylthiazol-5(2H)-ylidene]ethyl phosphate-binding site is contributed by Gly-305.

Belongs to the thiamine-phosphate synthase family. It depends on Mg(2+) as a cofactor.

The catalysed reaction is 2-[(2R,5Z)-2-carboxy-4-methylthiazol-5(2H)-ylidene]ethyl phosphate + 4-amino-2-methyl-5-(diphosphooxymethyl)pyrimidine + 2 H(+) = thiamine phosphate + CO2 + diphosphate. The enzyme catalyses 2-(2-carboxy-4-methylthiazol-5-yl)ethyl phosphate + 4-amino-2-methyl-5-(diphosphooxymethyl)pyrimidine + 2 H(+) = thiamine phosphate + CO2 + diphosphate. It carries out the reaction 4-methyl-5-(2-phosphooxyethyl)-thiazole + 4-amino-2-methyl-5-(diphosphooxymethyl)pyrimidine + H(+) = thiamine phosphate + diphosphate. Its pathway is cofactor biosynthesis; thiamine diphosphate biosynthesis; thiamine phosphate from 4-amino-2-methyl-5-diphosphomethylpyrimidine and 4-methyl-5-(2-phosphoethyl)-thiazole: step 1/1. Its function is as follows. Condenses 4-methyl-5-(beta-hydroxyethyl)thiazole monophosphate (THZ-P) and 2-methyl-4-amino-5-hydroxymethyl pyrimidine pyrophosphate (HMP-PP) to form thiamine monophosphate (TMP). In Thermosynechococcus vestitus (strain NIES-2133 / IAM M-273 / BP-1), this protein is Thiamine-phosphate synthase.